A 246-amino-acid chain; its full sequence is Phosducin (246 aa).

Over residues methionine 1–glutamate 14 the composition is skewed to acidic residues. Residues methionine 1 to arginine 70 form a disordered region. The region spanning methionine 1–glutamate 246 is the Phosducin domain. Residues serine 58 to serine 69 are compositionally biased toward basic and acidic residues. Phosphoserine; by PKA is present on serine 73. The thioredoxin fold stretch occupies residues tyrosine 111 to glutamate 246.

This sequence belongs to the phosducin family. As to quaternary structure, interacts with CRX. Forms a complex with the beta and gamma subunits of the GTP-binding protein, transducin. In terms of processing, light-induced changes in cyclic nucleotide levels modulate the phosphorylation of this protein by cAMP kinase.

It localises to the cytoplasm. Its subcellular location is the cytosol. The protein resides in the nucleus. The protein localises to the cell projection. It is found in the cilium. It localises to the photoreceptor outer segment. Its subcellular location is the photoreceptor inner segment. Inhibits the transcriptional activation activity of the cone-rod homeobox CRX. May participate in the regulation of visual phototransduction or in the integration of photoreceptor metabolism. The protein is Phosducin (Pdc) of Rattus norvegicus (Rat).